The primary structure comprises 293 residues: Histamine N-methyltransferase A (293 aa).

Glutamate 28 is a binding site for substrate. S-adenosyl-L-methionine-binding residues include glycine 60, glutamate 89, glutamine 94, serine 120, and isoleucine 142. Asparagine 283 provides a ligand contact to substrate.

The protein belongs to the class I-like SAM-binding methyltransferase superfamily. HNMT family. In terms of assembly, monomer.

It localises to the cytoplasm. The catalysed reaction is histamine + S-adenosyl-L-methionine = N(tau)-methylhistamine + S-adenosyl-L-homocysteine + H(+). Its function is as follows. Inactivates histamine by N-methylation. Plays an important role in degrading histamine and in regulating the airway response to histamine. The polypeptide is Histamine N-methyltransferase A (hnmt-a) (Xenopus laevis (African clawed frog)).